The following is a 1352-amino-acid chain: Astrotactin-2 (1352 aa).

The disordered stretch occupies residues 1–31 (MAAAGARRSPGRGLGLRGRPRLGFHPGPPPP). The first 51 residues, 1 to 51 (MAAAGARRSPGRGLGLRGRPRLGFHPGPPPPPPPPLLLLFLLLLPPPPLLA), serve as a signal peptide directing secretion. At 52–218 (GATAAAASRE…IVEEQMHILH (167 aa)) the chain is on the lumenal side. Asn-180 carries an N-linked (GlcNAc...) asparagine glycan. A helical membrane pass occupies residues 219–239 (ISVMGGLIALLLLLLVFTVAL). Residues 240–447 (YAQRRWQKRR…KGLLKSPVNK (208 aa)) lie on the Cytoplasmic side of the membrane. 2 disordered regions span residues 308–327 (EEEEEPPRRANHVSREDEFG) and 375–421 (TPVE…ADDE). Positions 383–392 (QPASRSSTSA) are enriched in polar residues. A helical membrane pass occupies residues 448–468 (TALTLIAVSSCILAMVCGNQM). Residues 469–1352 (SCPLTVKVTL…RNTYGETKGR (884 aa)) are Lumenal-facing. EGF-like domains lie at 523-563 (VRDL…HLCV), 664-708 (PVRD…SGCY), and 712-764 (KGID…KSCL). 9 disulfide bridges follow: Cys-527/Cys-539, Cys-535/Cys-546, Cys-548/Cys-562, Cys-668/Cys-681, Cys-675/Cys-692, Cys-694/Cys-707, Cys-716/Cys-728, Cys-724/Cys-748, and Cys-750/Cys-763. N-linked (GlcNAc...) asparagine glycosylation occurs at Asn-796. 3 cysteine pairs are disulfide-bonded: Cys-838-Cys-1000, Cys-929-Cys-990, and Cys-996-Cys-1003. Residue Asn-1033 is glycosylated (N-linked (GlcNAc...) asparagine). 5 disulfides stabilise this stretch: Cys-1049–Cys-1060, Cys-1062–Cys-1075, Cys-1149–Cys-1171, Cys-1203–Cys-1290, and Cys-1311–Cys-1334. Positions 1079–1201 (PQPVLRLSPT…SELSTVTLRT (123 aa)) constitute a Fibronectin type-III domain.

It belongs to the astrotactin family. In terms of assembly, interacts with ASTN1; the interaction is not calcium-dependent. As to expression, detected in cerebellum granule neurons; not detected in astroglia (at protein level). Detected primarily in cerebellum, and at lower levels in brain cortex, olfactory bulb, hindbrain and hippocampus dentate gyrus. Between 6 and 10 days after birth, when granule cell migration occurs in the cerebellum, detected in granule cell precursors in the external germinal layer, the molecular layer, the internal granule layer and in Purkinje neurons. Detected in postmitotic neurons in adult cerebellum.

The protein localises to the membrane. The protein resides in the perikaryon. It localises to the cytoplasm. It is found in the cell cortex. Its subcellular location is the early endosome. The protein localises to the late endosome. The protein resides in the cytoplasmic vesicle. It localises to the clathrin-coated vesicle. Functionally, mediates recycling of the neuronal cell adhesion molecule ASTN1 to the anterior pole of the cell membrane in migrating neurons. Promotes ASTN1 internalization and intracellular transport of endocytosed ASTN1. Selectively binds inositol-4,5-bisphosphate, inositol-3,4,5-trisphosphate and inositol-1,3,4,5-tetrakisphosphate, suggesting it is recruited to membranes that contain lipids with a phosphoinositide headgroup. This Mus musculus (Mouse) protein is Astrotactin-2 (Astn2).